We begin with the raw amino-acid sequence, 632 residues long: 2-hydroxyacyl-CoA lyase 2 (632 aa).

The chain crosses the membrane as a helical span at residues 13–33; the sequence is LFPSFLLLACGTLVAALLGAA. Glutamate 98 serves as a coordination point for thiamine diphosphate. Residues 470–550 form a thiamine pyrophosphate binding region; it reads DFVGTAAHLV…VMALVGNDAG (81 aa). The Mg(2+) site is built by aspartate 521 and asparagine 547.

It belongs to the TPP enzyme family. It depends on Mg(2+) as a cofactor. Thiamine diphosphate serves as cofactor. As to expression, expressed in all tissues tested, with highest expression in heart, pancreas and placenta.

It is found in the endoplasmic reticulum membrane. The catalysed reaction is 2-hydroxyoctadecanoyl-CoA = heptadecanal + formyl-CoA. It carries out the reaction (2R)-hydroxyhexadecanoyl-CoA = pentadecanal + formyl-CoA. Endoplasmic reticulum 2-OH acyl-CoA lyase involved in the cleavage (C1 removal) reaction in the fatty acid alpha-oxydation in a thiamine pyrophosphate (TPP)-dependent manner. Involved in the phytosphingosine degradation pathway. This Homo sapiens (Human) protein is 2-hydroxyacyl-CoA lyase 2.